The sequence spans 509 residues: Zinc finger protein Aiolos (509 aa).

Residues 1–19 (MEDIQTNAELKSTQEQSVP) are compositionally biased toward polar residues. The tract at residues 1–86 (MEDIQTNAEL…MGNAEEPEIP (86 aa)) is disordered. Ser-22 and Ser-42 each carry phosphoserine. Residues 56–72 (DSMKVKDEYSERDENVL) are compositionally biased toward basic and acidic residues. Residues Lys-61, Lys-73, and Lys-100 each participate in a glycyl lysine isopeptide (Lys-Gly) (interchain with G-Cter in SUMO2) cross-link. 3 C2H2-type zinc fingers span residues 118–140 (MNCD…KRSH), 146–168 (FQCN…IKLH), and 174–196 (FKCH…LRTH). A C2H2-type 4; atypical zinc finger spans residues 202-224 (YKCEFCGRSYKQRSSLEEHKERC). Lys-245 participates in a covalent cross-link: Glycyl lysine isopeptide (Lys-Gly) (interchain with G-Cter in SUMO2). Thr-326 is subject to Phosphothreonine. Residues 364-394 (IHLPEKSVPSERGLSPNNSGHDSTDTDSNHE) form a disordered region. Ser-378 is modified (phosphoserine). Basic and acidic residues predominate over residues 385 to 394 (DSTDTDSNHE). The C2H2-type 5 zinc-finger motif lies at 452–474 (YRCDHCRVLFLDYVMFTIHMGCH). Positions 452-504 (YRCDHCRVLFLDYVMFTIHMGCHGFRDPFECNMCGYRSHDRYEFSSHIARGEH) are mediates homodimerization and heterodimerization. Residues 480 to 504 (FECNMCGYRSHDRYEFSSHIARGEH) form a C2H2-type 6; atypical zinc finger.

This sequence belongs to the Ikaros C2H2-type zinc-finger protein family. As to quaternary structure, homodimer. Heterodimer with other IKAROS family members. Interacts with IKZF4 and IKZF5. Interacts with IKZF1. Interacts with HRAS. Interacts with FOXP3; this interaction may be required for silencing target genes and regulating the suppressive activity of FOXP3-positive regulatory T-cells (Treg). Interacts with BCL21L isoform Bcl-X(L); this interaction blocks the anti-apoptotic role of BCL21L. Associates with histone deacetylase complexes containing HDAC1, MTA2 and SIN3A. Post-translationally, phosphorylation on tyrosine residues induced by IL2 is required for dissociation from HRAS and nuclear translocation of IKZF3 in T-cells. Phosphorylation on tyrosine residues induced by IL4 is required for dissociation from Bcl-X(L) in T-cells. Expressed most strongly in peripheral blood leukocytes, the spleen, and the thymus.

The protein localises to the nucleus. It is found in the cytoplasm. Its function is as follows. Transcription factor that plays an important role in the regulation of lymphocyte differentiation. Plays an essential role in regulation of B-cell differentiation, proliferation and maturation to an effector state. Involved in regulating BCL2 expression and controlling apoptosis in T-cells in an IL2-dependent manner. This is Zinc finger protein Aiolos (IKZF3) from Homo sapiens (Human).